Consider the following 124-residue polypeptide: S-adenosylmethionine decarboxylase proenzyme (124 aa).

The Schiff-base intermediate with substrate; via pyruvic acid role is filled by Ser-63. A Pyruvic acid (Ser); by autocatalysis modification is found at Ser-63. Residue His-68 is the Proton acceptor; for processing activity of the active site. The Proton donor; for catalytic activity role is filled by Cys-83.

The protein belongs to the prokaryotic AdoMetDC family. Type 1 subfamily. Heterotetramer of two alpha and two beta chains arranged as a dimer of alpha/beta heterodimers. It depends on pyruvate as a cofactor. Is synthesized initially as an inactive proenzyme. Formation of the active enzyme involves a self-maturation process in which the active site pyruvoyl group is generated from an internal serine residue via an autocatalytic post-translational modification. Two non-identical subunits are generated from the proenzyme in this reaction, and the pyruvate is formed at the N-terminus of the alpha chain, which is derived from the carboxyl end of the proenzyme. The post-translation cleavage follows an unusual pathway, termed non-hydrolytic serinolysis, in which the side chain hydroxyl group of the serine supplies its oxygen atom to form the C-terminus of the beta chain, while the remainder of the serine residue undergoes an oxidative deamination to produce ammonia and the pyruvoyl group blocking the N-terminus of the alpha chain.

The enzyme catalyses S-adenosyl-L-methionine + H(+) = S-adenosyl 3-(methylsulfanyl)propylamine + CO2. Its pathway is amine and polyamine biosynthesis; S-adenosylmethioninamine biosynthesis; S-adenosylmethioninamine from S-adenosyl-L-methionine: step 1/1. In terms of biological role, catalyzes the decarboxylation of S-adenosylmethionine to S-adenosylmethioninamine (dcAdoMet), the propylamine donor required for the synthesis of the polyamines spermine and spermidine from the diamine putrescine. The sequence is that of S-adenosylmethionine decarboxylase proenzyme from Geobacillus kaustophilus (strain HTA426).